The chain runs to 86 residues: Toxin Td2 (86 aa).

The signal sequence occupies residues Met-1–Cys-20. An LCN-type CS-alpha/beta domain is found at Lys-21–Gly-83. Intrachain disulfides connect Cys-31/Cys-82, Cys-35/Cys-57, Cys-43/Cys-63, and Cys-47/Cys-65. At Arg-84 the chain carries Arginine amide.

Expressed by the venom gland.

The protein localises to the secreted. Functionally, beta toxins bind voltage-independently at site-4 of sodium channels (Nav) and shift the voltage of activation toward more negative potentials thereby affecting sodium channel activation and promoting spontaneous and repetitive firing. This chain is Toxin Td2, found in Tityus discrepans (Venezuelan scorpion).